Reading from the N-terminus, the 172-residue chain is 3-phenylpropionate/cinnamic acid dioxygenase subunit beta (172 aa).

The protein belongs to the bacterial ring-hydroxylating dioxygenase beta subunit family. In terms of assembly, this dioxygenase system consists of four proteins: the two subunits of the hydroxylase component (HcaE and HcaF), a ferredoxin (HcaC) and a ferredoxin reductase (HcaD).

It carries out the reaction 3-phenylpropanoate + NADH + O2 + H(+) = 3-(cis-5,6-dihydroxycyclohexa-1,3-dien-1-yl)propanoate + NAD(+). The catalysed reaction is (E)-cinnamate + NADH + O2 + H(+) = (2E)-3-(cis-5,6-dihydroxycyclohexa-1,3-dien-1-yl)prop-2-enoate + NAD(+). It functions in the pathway aromatic compound metabolism; 3-phenylpropanoate degradation. Functionally, part of the multicomponent 3-phenylpropionate dioxygenase. Converts 3-phenylpropionic acid (PP) and cinnamic acid (CI) into 3-phenylpropionate-dihydrodiol (PP-dihydrodiol) and cinnamic acid-dihydrodiol (CI-dihydrodiol), respectively. The chain is 3-phenylpropionate/cinnamic acid dioxygenase subunit beta from Shigella boydii serotype 4 (strain Sb227).